A 278-amino-acid chain; its full sequence is MTFEPTETLRDPFVLYGESFDSRLLLGTARYPSPATLQAAVEISRPAMVTVALRRQGAVGEGEGGQAFWQMLKALGVPVLPNTAGCFTPQEVVNTAMMAREVFETDWIKLELIGDDYTLQPDTLNLPDVAETLIKEGFKVLPYCTEDLVLCRRLLDVGCQALMPWAAPIGTGRGAINPHAMRVLRERLPDTPLIVDAGLGLPSHAAQVLEWGYDGVLLNTAVAQAAYPVNMARAFAQAVEAGRTAYLAGPMPEREVAQASTPVVGMPFWHAENTEHRA.

Catalysis depends on K109, which acts as the Schiff-base intermediate with DXP. 1-deoxy-D-xylulose 5-phosphate contacts are provided by residues G170, 197-198, and 219-220; these read AG and NT.

The protein belongs to the ThiG family. Homotetramer. Forms heterodimers with either ThiH or ThiS.

It localises to the cytoplasm. It carries out the reaction [ThiS sulfur-carrier protein]-C-terminal-Gly-aminoethanethioate + 2-iminoacetate + 1-deoxy-D-xylulose 5-phosphate = [ThiS sulfur-carrier protein]-C-terminal Gly-Gly + 2-[(2R,5Z)-2-carboxy-4-methylthiazol-5(2H)-ylidene]ethyl phosphate + 2 H2O + H(+). The protein operates within cofactor biosynthesis; thiamine diphosphate biosynthesis. Catalyzes the rearrangement of 1-deoxy-D-xylulose 5-phosphate (DXP) to produce the thiazole phosphate moiety of thiamine. Sulfur is provided by the thiocarboxylate moiety of the carrier protein ThiS. In vitro, sulfur can be provided by H(2)S. This Cupriavidus pinatubonensis (strain JMP 134 / LMG 1197) (Cupriavidus necator (strain JMP 134)) protein is Thiazole synthase.